The following is a 510-amino-acid chain: ATP-dependent zinc metalloprotease FtsH 2 (510 aa).

The Cytoplasmic portion of the chain corresponds to 1-4; sequence MKKN. The chain crosses the membrane as a helical span at residues 5–25; it reads LHIIILALSIFINLLFIYIFI. Residues 26 to 31 are Extracellular-facing; it reads SEVKPN. Residues 32-52 traverse the membrane as a helical segment; the sequence is LNLNLSFILTAAVIVVTYLLF. Residues 53–510 are Cytoplasmic-facing; sequence KNKFSELMPV…LWEEENTLCV (458 aa). 124-131 is a binding site for ATP; sequence GPPGTGKT. Zn(2+) is bound at residue H343. Residue E344 is part of the active site. Residues H347 and D418 each coordinate Zn(2+).

It in the central section; belongs to the AAA ATPase family. This sequence in the C-terminal section; belongs to the peptidase M41 family. Homohexamer. Zn(2+) serves as cofactor.

It localises to the cell membrane. Functionally, acts as a processive, ATP-dependent zinc metallopeptidase for both cytoplasmic and membrane proteins. Plays a role in the quality control of integral membrane proteins. This chain is ATP-dependent zinc metalloprotease FtsH 2, found in Thermoanaerobacter sp. (strain X514).